The sequence spans 957 residues: Glycine dehydrogenase (decarboxylating) (957 aa).

K708 carries the N6-(pyridoxal phosphate)lysine modification.

It belongs to the GcvP family. The glycine cleavage system is composed of four proteins: P, T, L and H. The cofactor is pyridoxal 5'-phosphate.

It catalyses the reaction N(6)-[(R)-lipoyl]-L-lysyl-[glycine-cleavage complex H protein] + glycine + H(+) = N(6)-[(R)-S(8)-aminomethyldihydrolipoyl]-L-lysyl-[glycine-cleavage complex H protein] + CO2. In terms of biological role, the glycine cleavage system catalyzes the degradation of glycine. The P protein binds the alpha-amino group of glycine through its pyridoxal phosphate cofactor; CO(2) is released and the remaining methylamine moiety is then transferred to the lipoamide cofactor of the H protein. The protein is Glycine dehydrogenase (decarboxylating) of Salmonella typhimurium (strain LT2 / SGSC1412 / ATCC 700720).